The sequence spans 702 residues: Ribosomal RNA large subunit methyltransferase K/L (702 aa).

The THUMP domain occupies 43-154; the sequence is LVYQSLMWSR…KETASIALDL (112 aa).

Belongs to the methyltransferase superfamily. RlmKL family.

It localises to the cytoplasm. The enzyme catalyses guanosine(2445) in 23S rRNA + S-adenosyl-L-methionine = N(2)-methylguanosine(2445) in 23S rRNA + S-adenosyl-L-homocysteine + H(+). It catalyses the reaction guanosine(2069) in 23S rRNA + S-adenosyl-L-methionine = N(2)-methylguanosine(2069) in 23S rRNA + S-adenosyl-L-homocysteine + H(+). Functionally, specifically methylates the guanine in position 2445 (m2G2445) and the guanine in position 2069 (m7G2069) of 23S rRNA. This is Ribosomal RNA large subunit methyltransferase K/L from Shigella boydii serotype 18 (strain CDC 3083-94 / BS512).